Consider the following 238-residue polypeptide: Ribonuclease PH (238 aa).

Phosphate-binding positions include Arg-86 and Gly-124–Arg-126.

Belongs to the RNase PH family. As to quaternary structure, homohexameric ring arranged as a trimer of dimers.

It carries out the reaction tRNA(n+1) + phosphate = tRNA(n) + a ribonucleoside 5'-diphosphate. Its function is as follows. Phosphorolytic 3'-5' exoribonuclease that plays an important role in tRNA 3'-end maturation. Removes nucleotide residues following the 3'-CCA terminus of tRNAs; can also add nucleotides to the ends of RNA molecules by using nucleoside diphosphates as substrates, but this may not be physiologically important. Probably plays a role in initiation of 16S rRNA degradation (leading to ribosome degradation) during starvation. This is Ribonuclease PH from Actinobacillus succinogenes (strain ATCC 55618 / DSM 22257 / CCUG 43843 / 130Z).